The primary structure comprises 173 residues: Adenine phosphoribosyltransferase (173 aa).

This sequence belongs to the purine/pyrimidine phosphoribosyltransferase family. As to quaternary structure, homodimer.

Its subcellular location is the cytoplasm. It catalyses the reaction AMP + diphosphate = 5-phospho-alpha-D-ribose 1-diphosphate + adenine. It functions in the pathway purine metabolism; AMP biosynthesis via salvage pathway; AMP from adenine: step 1/1. Functionally, catalyzes a salvage reaction resulting in the formation of AMP, that is energically less costly than de novo synthesis. This chain is Adenine phosphoribosyltransferase, found in Methanococcus vannielii (strain ATCC 35089 / DSM 1224 / JCM 13029 / OCM 148 / SB).